Consider the following 156-residue polypeptide: Small ribosomal subunit protein uS7 (156 aa).

It belongs to the universal ribosomal protein uS7 family. Part of the 30S ribosomal subunit. Contacts proteins S9 and S11.

One of the primary rRNA binding proteins, it binds directly to 16S rRNA where it nucleates assembly of the head domain of the 30S subunit. Is located at the subunit interface close to the decoding center, probably blocks exit of the E-site tRNA. This Phytoplasma australiense protein is Small ribosomal subunit protein uS7.